The chain runs to 367 residues: 15-cis-zeta-carotene isomerase, chloroplastic (367 aa).

A chloroplast-targeting transit peptide spans 1 to 58 (MAVYHLLLSSPPSLLLLPPSPRRPNLTLIRRIPAHPRLGNSTSLLSSSSPVIRKILVR). A run of 6 helical transmembrane segments spans residues 95–115 (SWVYFGVVLGVVLFILNVVWI), 137–157 (EVAMLMLILIFAIVHSGLASL), 172–192 (VLFAGISLPLAMSTIVYFINH), 211–231 (AIWVANFVSFFFLYPSTFNLL), 269–289 (LWIGNTVAASASLGLIAHHLF), and 339–359 (LPYLAITALTVGAYFAHPLMQ).

As to expression, expressed in leaves and at lower levels in roots.

It localises to the plastid. It is found in the chloroplast membrane. The catalysed reaction is 9,9',15-tri-cis-zeta-carotene = 9,9'-di-cis-zeta-carotene. Isomerase involved in the biosynthesis of carotenoids. Catalyzes the cis- to trans-conversion of the 15-cis-bond in 9,15,9'-tri-cis-zeta-carotene. This is 15-cis-zeta-carotene isomerase, chloroplastic (Z-ISO) from Arabidopsis thaliana (Mouse-ear cress).